Consider the following 512-residue polypeptide: Maturase K (512 aa).

The protein belongs to the intron maturase 2 family. MatK subfamily.

It is found in the plastid. The protein localises to the chloroplast. In terms of biological role, usually encoded in the trnK tRNA gene intron. Probably assists in splicing its own and other chloroplast group II introns. The chain is Maturase K from Lemna aequinoctialis (Lesser duckweed).